Consider the following 400-residue polypeptide: Phosphoglycerate kinase (400 aa).

Residues 23–25, Arg-38, 61–64, Arg-120, and Arg-153 contribute to the substrate site; these read DLN and HFGR. ATP-binding positions include Lys-203, Glu-325, and 355–358; that span reads GGDT.

It belongs to the phosphoglycerate kinase family. In terms of assembly, monomer.

The protein localises to the cytoplasm. It carries out the reaction (2R)-3-phosphoglycerate + ATP = (2R)-3-phospho-glyceroyl phosphate + ADP. It participates in carbohydrate degradation; glycolysis; pyruvate from D-glyceraldehyde 3-phosphate: step 2/5. In Agrobacterium fabrum (strain C58 / ATCC 33970) (Agrobacterium tumefaciens (strain C58)), this protein is Phosphoglycerate kinase.